The primary structure comprises 107 residues: Thioredoxin (107 aa).

In terms of domain architecture, Thioredoxin spans 2–107; sequence VVHIENLNAF…TLKQKINDHK (106 aa). Active-site nucleophile residues include cysteine 32 and cysteine 35. An intrachain disulfide couples cysteine 32 to cysteine 35. 2 positions are modified to S-nitrosocysteine: cysteine 71 and cysteine 75.

The protein belongs to the thioredoxin family. May be nitrosylated on several cysteine residues, depending on the oxidation state. Nitrosylated Cys-75 may serve as donor for nitrosylation of target proteins.

It is found in the nucleus. Its subcellular location is the cytoplasm. The protein localises to the secreted. Functionally, participates in various redox reactions through the reversible oxidation of its active center dithiol to a disulfide and catalyzes dithiol-disulfide exchange reactions. Plays a role in the reversible S-nitrosylation of cysteine residues in target proteins, and thereby contributes to the response to intracellular nitric oxide. Nitrosylates the active site Cys of CASP3 in response to nitric oxide (NO), and thereby inhibits caspase-3 activity. Induces the FOS/JUN AP-1 DNA binding activity in ionizing radiation (IR) cells through its oxidation/reduction status and stimulates AP-1 transcriptional activity. In Ictalurus punctatus (Channel catfish), this protein is Thioredoxin (txn).